The following is a 104-amino-acid chain: uncharacterized protein (104 aa).

This sequence belongs to the BolA/IbaG family.

This is an uncharacterized protein from Buchnera aphidicola subsp. Acyrthosiphon pisum (strain APS) (Acyrthosiphon pisum symbiotic bacterium).